The primary structure comprises 360 residues: Phenylalanine--tRNA ligase alpha subunit (360 aa).

Glu260 lines the Mg(2+) pocket.

It belongs to the class-II aminoacyl-tRNA synthetase family. Phe-tRNA synthetase alpha subunit type 1 subfamily. As to quaternary structure, tetramer of two alpha and two beta subunits. Mg(2+) serves as cofactor.

The protein resides in the cytoplasm. It catalyses the reaction tRNA(Phe) + L-phenylalanine + ATP = L-phenylalanyl-tRNA(Phe) + AMP + diphosphate + H(+). The sequence is that of Phenylalanine--tRNA ligase alpha subunit from Rhodopseudomonas palustris (strain ATCC BAA-98 / CGA009).